Reading from the N-terminus, the 621-residue chain is 1-deoxy-D-xylulose-5-phosphate synthase (621 aa).

Residues histidine 80 and 121–123 contribute to the thiamine diphosphate site; that span reads GHS. Aspartate 152 serves as a coordination point for Mg(2+). Residues 153–154, asparagine 181, tyrosine 288, and glutamate 371 contribute to the thiamine diphosphate site; that span reads GA. Asparagine 181 lines the Mg(2+) pocket.

The protein belongs to the transketolase family. DXPS subfamily. As to quaternary structure, homodimer. It depends on Mg(2+) as a cofactor. Thiamine diphosphate serves as cofactor.

It carries out the reaction D-glyceraldehyde 3-phosphate + pyruvate + H(+) = 1-deoxy-D-xylulose 5-phosphate + CO2. It participates in metabolic intermediate biosynthesis; 1-deoxy-D-xylulose 5-phosphate biosynthesis; 1-deoxy-D-xylulose 5-phosphate from D-glyceraldehyde 3-phosphate and pyruvate: step 1/1. Functionally, catalyzes the acyloin condensation reaction between C atoms 2 and 3 of pyruvate and glyceraldehyde 3-phosphate to yield 1-deoxy-D-xylulose-5-phosphate (DXP). The sequence is that of 1-deoxy-D-xylulose-5-phosphate synthase from Pectobacterium atrosepticum (strain SCRI 1043 / ATCC BAA-672) (Erwinia carotovora subsp. atroseptica).